The sequence spans 263 residues: Acetylglutamate kinase (263 aa).

Substrate-binding positions include 48–49 (GG), Arg-70, and Asn-162.

The protein belongs to the acetylglutamate kinase family. ArgB subfamily.

The protein localises to the cytoplasm. It catalyses the reaction N-acetyl-L-glutamate + ATP = N-acetyl-L-glutamyl 5-phosphate + ADP. The protein operates within amino-acid biosynthesis; L-arginine biosynthesis; N(2)-acetyl-L-ornithine from L-glutamate: step 2/4. Catalyzes the ATP-dependent phosphorylation of N-acetyl-L-glutamate. In Vibrio campbellii (strain ATCC BAA-1116), this protein is Acetylglutamate kinase.